The chain runs to 366 residues: DNA replication and repair protein RecF (366 aa).

30–37 (GDNGMGKT) is a binding site for ATP.

It belongs to the RecF family.

The protein localises to the cytoplasm. The RecF protein is involved in DNA metabolism; it is required for DNA replication and normal SOS inducibility. RecF binds preferentially to single-stranded, linear DNA. It also seems to bind ATP. This is DNA replication and repair protein RecF from Azobacteroides pseudotrichonymphae genomovar. CFP2.